We begin with the raw amino-acid sequence, 369 residues long: MSPPPQRIGLPWPELNDGLAYKDAISSSESELTTVSEFYFTKYKSSAPLLGWIQRIQNGQIQIDGEVVKDPNTLLRSGSKLVYSRLPWKEPDTPYSLEVLYEDDDLIALNKPSGLQVLPGGLFQQRTVLTQLQWCFGKNDSYIGSRESPHPVPVHRLGRGTSGILLCAKTKLAKTKLAAYFAEGTSLVGSGNLDQECGTGRKLSKIYRALADGIVEEDEVVIKQPIGVVRYPGVAQGLYVASPEGKPAFSKVFVLERDREKNCSLVKVEIQSGRPHQIRIHLAYMGHPLVGDPLYVAGGQPKCFDPDLVDDAAAFAEDGGYRRPNQAVPGDCGYHLHAHQVELPNLLNTHKVVKIVAPLPPILQTRCET.

Residues 47-104 form the S4 RNA-binding domain; the sequence is APLLGWIQRIQNGQIQIDGEVVKDPNTLLRSGSKLVYSRLPWKEPDTPYSLEVLYEDD.

The protein belongs to the pseudouridine synthase RluA family.

The catalysed reaction is a uridine in RNA = a pseudouridine in RNA. This is RNA pseudouridine synthase 5 from Arabidopsis thaliana (Mouse-ear cress).